Consider the following 260-residue polypeptide: Flap endonuclease Xni (260 aa).

Asp105 lines the Mg(2+) pocket. The 5'-3' exonuclease domain occupies 164–259 (NQFLDLMALA…VNGPANTQQA (96 aa)). The K(+) site is built by Leu172, Ala173, Pro181, Ile183, and Ile186. Positions 185–190 (GIGPKS) are interaction with DNA.

The protein belongs to the Xni family. Mg(2+) is required as a cofactor. K(+) serves as cofactor.

In terms of biological role, has flap endonuclease activity. During DNA replication, flap endonucleases cleave the 5'-overhanging flap structure that is generated by displacement synthesis when DNA polymerase encounters the 5'-end of a downstream Okazaki fragment. This is Flap endonuclease Xni from Shewanella sp. (strain MR-4).